The following is a 512-amino-acid chain: ATP synthase subunit alpha (512 aa).

Residue 169 to 176 (GDRQTGKT) participates in ATP binding.

This sequence belongs to the ATPase alpha/beta chains family. In terms of assembly, F-type ATPases have 2 components, CF(1) - the catalytic core - and CF(0) - the membrane proton channel. CF(1) has five subunits: alpha(3), beta(3), gamma(1), delta(1), epsilon(1). CF(0) has four main subunits: a(1), b(1), b'(1) and c(9-12).

The protein localises to the cell inner membrane. It catalyses the reaction ATP + H2O + 4 H(+)(in) = ADP + phosphate + 5 H(+)(out). Produces ATP from ADP in the presence of a proton gradient across the membrane. The alpha chain is a regulatory subunit. The sequence is that of ATP synthase subunit alpha from Jannaschia sp. (strain CCS1).